We begin with the raw amino-acid sequence, 308 residues long: Methionyl-tRNA formyltransferase (308 aa).

(6S)-5,6,7,8-tetrahydrofolate is bound at residue 110-113; that stretch reads SLLP.

The protein belongs to the Fmt family.

The catalysed reaction is L-methionyl-tRNA(fMet) + (6R)-10-formyltetrahydrofolate = N-formyl-L-methionyl-tRNA(fMet) + (6S)-5,6,7,8-tetrahydrofolate + H(+). Its function is as follows. Attaches a formyl group to the free amino group of methionyl-tRNA(fMet). The formyl group appears to play a dual role in the initiator identity of N-formylmethionyl-tRNA by promoting its recognition by IF2 and preventing the misappropriation of this tRNA by the elongation apparatus. The protein is Methionyl-tRNA formyltransferase of Neisseria meningitidis serogroup B (strain ATCC BAA-335 / MC58).